A 165-amino-acid chain; its full sequence is Probable DNA polymerase III subunit chi (165 aa).

Belongs to the DNA polymerase III chi/HolC chain family. As to quaternary structure, DNA polymerase III contains a core (composed of alpha, epsilon and theta chains) that associates with a tau subunit. This core dimerizes to form the POLIII' complex. PolIII' associates with the gamma complex (composed of gamma, delta, delta', psi and chi chains) and with the beta chain to form the complete DNA polymerase III complex. Interacts directly with the psi subunit (holD). The only subunit of the DNA polymerase III holoenzyme known to interact with single-stranded DNA binding protein (SSB).

The catalysed reaction is DNA(n) + a 2'-deoxyribonucleoside 5'-triphosphate = DNA(n+1) + diphosphate. Functionally, part of the beta sliding clamp loading complex, which hydrolyzes ATP to load the beta clamp onto primed DNA to form the DNA replication pre-initiation complex. DNA polymerase III is a complex, multichain enzyme responsible for most of the replicative synthesis in bacteria. This DNA polymerase also exhibits 3' to 5' exonuclease activity. In Rickettsia prowazekii (strain Madrid E), this protein is Probable DNA polymerase III subunit chi.